The chain runs to 328 residues: Malate dehydrogenase (328 aa).

11-17 (GAAGQIG) is an NAD(+) binding site. Residues R94 and R100 each contribute to the substrate site. NAD(+) contacts are provided by residues N107, Q114, and 131–133 (VGN). Substrate-binding residues include N133 and R164. H189 (proton acceptor) is an active-site residue.

It belongs to the LDH/MDH superfamily. MDH type 2 family.

The catalysed reaction is (S)-malate + NAD(+) = oxaloacetate + NADH + H(+). Catalyzes the reversible oxidation of malate to oxaloacetate. In Stenotrophomonas maltophilia (strain K279a), this protein is Malate dehydrogenase.